The chain runs to 264 residues: Apolipoprotein A-I (264 aa).

A signal peptide spans 1 to 18 (MKAVVLAVAVLFLTGSQA). A run of 2 repeats spans residues 67–88 (LNLLANWNTLTSTFNNLREQLG) and 89–110 (SVTKEFWDNLGEDTVWLRQQMN). Residues 67 to 264 (LNLLANWNTL…DQASKQLSAQ (198 aa)) are 10 X approximate tandem repeats. Methionine sulfoxide is present on methionine 109. The stretch at 111-121 (KDLEEVKQKVQ) is one 3; half-length repeat. 5 tandem repeats follow at residues 122–142 (SYLDNFQKKVNEEVERYRDKV), 144–165 (PLGKELHKDAQQKLKELQEKLA), 166–187 (PLGQDIRQRAREYVDALRTHLG), 188–208 (SYTQGMRQGLAKRLEALKESA), and 209–229 (PVSEYQVKASKHLKTFSEKAK). Residue methionine 193 is modified to Methionine sulfoxide. One copy of the 9; half-length repeat lies at 230 to 240 (PALEDLRQGLM). Methionine 240 bears the Methionine sulfoxide mark. Residues 241–264 (PVMESLKASFLSSIDQASKQLSAQ) form repeat 10.

The protein belongs to the apolipoprotein A1/A4/E family. In terms of assembly, homodimer. Interacts with APOA1BP and CLU. Component of a sperm activating protein complex (SPAP), consisting of APOA1, an immunoglobulin heavy chain, an immunoglobulin light chain and albumin. Interacts with NDRG1. Interacts with SCGB3A2. Interacts with NAXE and YJEFN3. In terms of processing, glycosylated. Palmitoylated. Post-translationally, phosphorylation sites are present in the extracellular medium. Major protein of plasma HDL, also found in chylomicrons.

The protein localises to the secreted. Its function is as follows. Participates in the reverse transport of cholesterol from tissues to the liver for excretion by promoting cholesterol efflux from tissues and by acting as a cofactor for the lecithin cholesterol acyltransferase (LCAT). As part of the SPAP complex, activates spermatozoa motility. This chain is Apolipoprotein A-I (Apoa1), found in Heterocephalus glaber (Naked mole rat).